Reading from the N-terminus, the 213-residue chain is Probable transaldolase (213 aa).

Residue Lys83 is the Schiff-base intermediate with substrate of the active site.

Belongs to the transaldolase family. Type 3B subfamily.

The protein resides in the cytoplasm. It catalyses the reaction D-sedoheptulose 7-phosphate + D-glyceraldehyde 3-phosphate = D-erythrose 4-phosphate + beta-D-fructose 6-phosphate. Its pathway is carbohydrate degradation; pentose phosphate pathway; D-glyceraldehyde 3-phosphate and beta-D-fructose 6-phosphate from D-ribose 5-phosphate and D-xylulose 5-phosphate (non-oxidative stage): step 2/3. Its function is as follows. Transaldolase is important for the balance of metabolites in the pentose-phosphate pathway. This chain is Probable transaldolase, found in Desulfitobacterium hafniense (strain DSM 10664 / DCB-2).